Consider the following 62-residue polypeptide: Large ribosomal subunit protein bL28 (62 aa).

The protein belongs to the bacterial ribosomal protein bL28 family.

The sequence is that of Large ribosomal subunit protein bL28 from Halalkalibacterium halodurans (strain ATCC BAA-125 / DSM 18197 / FERM 7344 / JCM 9153 / C-125) (Bacillus halodurans).